The sequence spans 291 residues: Cytochrome c-552 (291 aa).

The signal sequence occupies residues 1–23 (MKKTLMASAVGAVIAFGTHGAMA). Heme c contacts are provided by Cys-68, Cys-71, His-72, Cys-157, Cys-161, and His-162.

In terms of processing, binds 2 heme c groups per subunit.

Its subcellular location is the periplasm. Functionally, may play a role in nitrite reduction. Shows peroxidase activity on proteolytic modification. The chain is Cytochrome c-552 (nirB) from Stutzerimonas stutzeri (Pseudomonas stutzeri).